A 283-amino-acid polypeptide reads, in one-letter code: Pantothenate synthetase (283 aa).

ATP is bound at residue 30 to 37 (MGNLHDGH). His-37 (proton donor) is an active-site residue. Gln-61 lines the (R)-pantoate pocket. Residue Gln-61 coordinates beta-alanine. 149–152 (GEKD) contacts ATP. Gln-155 contacts (R)-pantoate. Position 186-189 (186-189 (LSSR)) interacts with ATP.

It belongs to the pantothenate synthetase family. Homodimer.

It is found in the cytoplasm. The catalysed reaction is (R)-pantoate + beta-alanine + ATP = (R)-pantothenate + AMP + diphosphate + H(+). It functions in the pathway cofactor biosynthesis; (R)-pantothenate biosynthesis; (R)-pantothenate from (R)-pantoate and beta-alanine: step 1/1. In terms of biological role, catalyzes the condensation of pantoate with beta-alanine in an ATP-dependent reaction via a pantoyl-adenylate intermediate. The protein is Pantothenate synthetase of Escherichia coli (strain SMS-3-5 / SECEC).